A 472-amino-acid chain; its full sequence is 4-aminobutyrate aminotransferase (472 aa).

Residue 135–136 (GA) coordinates pyridoxal 5'-phosphate. Arginine 193 contributes to the substrate binding site. Position 327 is an N6-(pyridoxal phosphate)lysine (lysine 327). Threonine 352 provides a ligand contact to pyridoxal 5'-phosphate.

It belongs to the class-III pyridoxal-phosphate-dependent aminotransferase family. As to quaternary structure, homodimer and homotetramer. Pyridoxal 5'-phosphate is required as a cofactor.

Its subcellular location is the cytoplasm. The catalysed reaction is 4-aminobutanoate + 2-oxoglutarate = succinate semialdehyde + L-glutamate. Its pathway is amino-acid degradation; L-arginine degradation. Required for the degradation of gamma-aminobutyric acid (GABA), which is important for utilization of GABA as nitrogen source and for oxidative stress tolerance. Deaminates GABA to succinate semialdehyde, which in turn is converted to succinate by the succinate-semialdehyde dehydrogenase UGA2. May be involved in an alternative, arginase-independent arginine degradation pathway via GABA. The protein is 4-aminobutyrate aminotransferase of Kluyveromyces lactis (strain ATCC 8585 / CBS 2359 / DSM 70799 / NBRC 1267 / NRRL Y-1140 / WM37) (Yeast).